We begin with the raw amino-acid sequence, 1405 residues long: DNA-directed RNA polymerase subunit beta' (1405 aa).

The Zn(2+) site is built by cysteine 70, cysteine 72, cysteine 85, and cysteine 88. Mg(2+) contacts are provided by aspartate 460, aspartate 462, and aspartate 464. Zn(2+)-binding residues include cysteine 814, cysteine 888, cysteine 895, and cysteine 898.

The protein belongs to the RNA polymerase beta' chain family. As to quaternary structure, the RNAP catalytic core consists of 2 alpha, 1 beta, 1 beta' and 1 omega subunit. When a sigma factor is associated with the core the holoenzyme is formed, which can initiate transcription. Mg(2+) serves as cofactor. Zn(2+) is required as a cofactor.

The catalysed reaction is RNA(n) + a ribonucleoside 5'-triphosphate = RNA(n+1) + diphosphate. In terms of biological role, DNA-dependent RNA polymerase catalyzes the transcription of DNA into RNA using the four ribonucleoside triphosphates as substrates. This chain is DNA-directed RNA polymerase subunit beta', found in Shewanella sediminis (strain HAW-EB3).